Here is a 682-residue protein sequence, read N- to C-terminus: Tetratricopeptide repeat protein 39B (682 aa).

2 TPR repeats span residues 393–426 (SLVL…QEEW) and 626–659 (PFTL…YKDY).

This sequence belongs to the TTC39 family.

In terms of biological role, regulates high density lipoprotein (HDL) cholesterol metabolism by promoting the ubiquitination and degradation of the oxysterols receptors LXR (NR1H2 and NR1H3). This is Tetratricopeptide repeat protein 39B from Homo sapiens (Human).